The primary structure comprises 496 residues: Pup--protein ligase (496 aa).

Glutamate 30 contacts Mg(2+). Residue arginine 73 coordinates ATP. Position 75 (tyrosine 75) interacts with Mg(2+). Aspartate 77 serves as the catalytic Proton acceptor. Glutamate 83 is a Mg(2+) binding site. 2 residues coordinate ATP: threonine 86 and tryptophan 450.

This sequence belongs to the Pup ligase/Pup deamidase family. Pup-conjugating enzyme subfamily.

It carries out the reaction ATP + [prokaryotic ubiquitin-like protein]-L-glutamate + [protein]-L-lysine = ADP + phosphate + N(6)-([prokaryotic ubiquitin-like protein]-gamma-L-glutamyl)-[protein]-L-lysine.. Its pathway is protein degradation; proteasomal Pup-dependent pathway. It functions in the pathway protein modification; protein pupylation. Its function is as follows. Catalyzes the covalent attachment of the prokaryotic ubiquitin-like protein modifier Pup to the proteasomal substrate proteins, thereby targeting them for proteasomal degradation. This tagging system is termed pupylation. The ligation reaction involves the side-chain carboxylate of the C-terminal glutamate of Pup and the side-chain amino group of a substrate lysine. This Bifidobacterium animalis subsp. lactis (strain AD011) protein is Pup--protein ligase.